Here is a 547-residue protein sequence, read N- to C-terminus: Agglutinin-1 (547 aa).

The first 20 residues, 1 to 20 (MKFETTKNKLHGNAYYQAQF), serve as a signal peptide directing secretion. Pyrrolidone carboxylic acid is present on glutamine 21. Glutamate 183 is an active-site residue. Intrachain disulfides connect cysteine 266–cysteine 288, cysteine 305–cysteine 324, and cysteine 348–cysteine 365. Residues 279–280 (RS) constitute a propeptide, linker peptide. A Ricin B-type lectin 1 domain is found at 292-419 (YEPTVRIGGR…YRMRQGWRTG (128 aa)). The stretch at 302–344 (DGLCVDVSDNAYNNGNPIILWKCKDQLEVNQLWTLKSDKTIRS) is one 1-alpha repeat. Residues 345 to 385 (KGKCLTTYGYAPGNYVMIYDCSSAVAEATYWDIWDNGTIIN) form a 1-beta repeat. Residues asparagine 380 and asparagine 420 are each glycosylated (N-linked (GlcNAc...) asparagine). The stretch at 388 to 420 (SGLVLSAESSSMGGTLTVQKNDYRMRQGWRTGN) is one 1-gamma repeat. Residues 422–546 (TSPFVTSIAG…GNANQMWATL (125 aa)) form the Ricin B-type lectin 2 domain. Residues 433-468 (FKLCMEAHGNSMWLDVCDITKEEQQWAVYPDGSIRP) form a 2-alpha repeat. 2 cysteine pairs are disulfide-bonded: cysteine 436-cysteine 449 and cysteine 475-cysteine 492. A 2-beta repeat occupies 472–511 (TNNCLTCEEHKQGATIVMMGCSNAWASQRWVFKSDGTIYN). Residues 514 to 547 (DDMVMDVKSSDPSLKQIILWPYTGNANQMWATLF) form a 2-gamma repeat.

It in the N-terminal section; belongs to the ribosome-inactivating protein family. Type 2 RIP subfamily. In terms of assembly, heterotetramer of two A and two B chains.

The catalysed reaction is Endohydrolysis of the N-glycosidic bond at one specific adenosine on the 28S rRNA.. Functionally, the A chain is responsible for inhibiting protein synthesis through the catalytic inactivation of 60S ribosomal subunits by removing adenine from position 4,324 of 28S rRNA. Less toxic than abrin-a. In terms of biological role, the B chain is a galactose-specific lectin that facilitates the binding to the cell membrane that precedes endocytosis. This is Agglutinin-1 from Abrus precatorius (Indian licorice).